The following is a 516-amino-acid chain: Nondiscriminating glutamyl-tRNA synthetase EARS2, mitochondrial (516 aa).

Residues M1–F39 constitute a mitochondrion transit peptide. R38–A40 is a binding site for L-glutamate. The 'HIGH' region motif lies at P43–G51. H48 is an ATP binding site. Residues E74, Y226–N230, and R244 contribute to the L-glutamate site. Residues E247 and K282–R286 contribute to the ATP site. The 'KMSKS' region motif lies at K282–R286.

Belongs to the class-I aminoacyl-tRNA synthetase family. Glutamate--tRNA ligase type 1 subfamily.

It is found in the mitochondrion matrix. The enzyme catalyses tRNA(Glx) + L-glutamate + ATP = L-glutamyl-tRNA(Glx) + AMP + diphosphate. It catalyses the reaction tRNA(Glu) + L-glutamate + ATP = L-glutamyl-tRNA(Glu) + AMP + diphosphate. It carries out the reaction tRNA(Gln) + L-glutamate + ATP = L-glutamyl-tRNA(Gln) + AMP + diphosphate. Its function is as follows. Non-discriminating glutamyl-tRNA synthetase that catalyzes aminoacylation of both mitochondrial tRNA(Glu) and tRNA(Gln) and participates in RNA aminoacylation for mitochondrial protein translation. Attachs glutamate to tRNA(Glu) or tRNA(Gln) in a two-step reaction: glutamate is first activated by ATP to form Glu-AMP and then transferred to the acceptor end of tRNA(Glu) or tRNA(Gln). This is Nondiscriminating glutamyl-tRNA synthetase EARS2, mitochondrial from Xenopus tropicalis (Western clawed frog).